Here is a 425-residue protein sequence, read N- to C-terminus: Polyribonucleotide 5'-hydroxyl-kinase Clp1 (425 aa).

ATP is bound by residues Glu22, Lys62, and 124–129; that span reads DVGKST.

The protein belongs to the Clp1 family. Clp1 subfamily. As to quaternary structure, component of the tRNA splicing endonuclease complex. Component of pre-mRNA cleavage complex II (CF-II).

It localises to the nucleus. The catalysed reaction is a 5'-end dephospho-2'-deoxyribonucleoside-DNA + ATP = a 5'-end 5'-phospho-2'-deoxyribonucleoside-DNA + ADP + H(+). It carries out the reaction a 5'-end dephospho-ribonucleoside-RNA + ATP = a 5'-end 5'-phospho-ribonucleoside-RNA + ADP + H(+). Polynucleotide kinase that can phosphorylate the 5'-hydroxyl groups of double-stranded RNA (dsRNA), single-stranded RNA (ssRNA), double stranded DNA (dsDNA) and double-stranded DNA:RNA hybrids. dsRNA is phosphorylated more efficiently than dsDNA, and the RNA component of a DNA:RNA hybrid is phosphorylated more efficiently than the DNA component. Plays a role in both tRNA splicing and mRNA 3'-end formation. Component of the tRNA splicing endonuclease complex: phosphorylates the 5'-terminus of the tRNA 3'-exon during tRNA splicing; this phosphorylation event is a prerequisite for the subsequent ligation of the two exon halves and the production of a mature tRNA. Its role in tRNA splicing and maturation is required for cerebellar development. Component of the pre-mRNA cleavage complex II (CF-II), which seems to be required for mRNA 3'-end formation. Also phosphorylates the 5'-terminus of exogenously introduced short interfering RNAs (siRNAs), which is a necessary prerequisite for their incorporation into the RNA-induced silencing complex (RISC). However, endogenous siRNAs and microRNAs (miRNAs) that are produced by the cleavage of dsRNA precursors by dicer1 already contain a 5'-phosphate group, so this protein may be dispensible for normal RNA-mediated gene silencing. The chain is Polyribonucleotide 5'-hydroxyl-kinase Clp1 from Gallus gallus (Chicken).